A 121-amino-acid chain; its full sequence is Trypsin/alpha-amylase inhibitor CMX2 (121 aa).

The signal sequence occupies residues 1 to 24 (MAFKHQLILSTAILLAVLAAASAS).

The protein belongs to the protease inhibitor I6 (cereal trypsin/alpha-amylase inhibitor) family.

The protein localises to the secreted. The chain is Trypsin/alpha-amylase inhibitor CMX2 from Triticum aestivum (Wheat).